A 563-amino-acid chain; its full sequence is Calnexin homolog (563 aa).

The signal sequence occupies residues 1-23 (MRFNAAITGALVSSATLMGQAHA). At 24–493 (EETEKKADAT…PINAVKQVPE (470 aa)) the chain is on the lumenal side. Position 98 (aspartate 98) interacts with Ca(2+). Cysteine 141 and cysteine 175 are oxidised to a cystine. An alpha-D-glucoside contacts are provided by tyrosine 145, lysine 147, tyrosine 166, and aspartate 173. Residue asparagine 236 is glycosylated (N-linked (GlcNAc...) asparagine). Residues 241–323 (EDFAPPVNPE…EKPEDWDDEE (83 aa)) form a disordered region. A compositionally biased stretch (basic and acidic residues) spans 249-279 (PEKEIDDPKDKKPADWVDEAKIPDPEAKKPD). Positions 253-386 (IDDPKDKKPA…RKIPNPAYFE (134 aa)) are p domain (Extended arm). Positions 280-305 (DWDEDAPYEIVDEEATMPEDWLEDEP) are enriched in acidic residues. A disulfide bond links cysteine 337 and cysteine 343. Residue glutamate 402 coordinates an alpha-D-glucoside. Aspartate 413 lines the Ca(2+) pocket. A helical transmembrane segment spans residues 494–514 (VAGGLGALLLTMILVIVGAVG). Residues 515 to 563 (ASSPAPAAAAKKGKEAASAAKEKASEAVSSAADTAKGAATKRNTRSSAQ) lie on the Cytoplasmic side of the membrane. The tract at residues 521 to 563 (AAAAKKGKEAASAAKEKASEAVSSAADTAKGAATKRNTRSSAQ) is disordered. Over residues 526 to 539 (KGKEAASAAKEKAS) the composition is skewed to basic and acidic residues.

The protein belongs to the calreticulin family.

It localises to the endoplasmic reticulum membrane. Functionally, interacts with newly synthesized monoglucosylated glycoproteins in the endoplasmic reticulum. It may act in assisting protein assembly and/or in the retention within the ER of unassembled protein subunits. It seems to play a major role in the quality control apparatus of the ER by the retention of incorrectly folded proteins. This is Calnexin homolog from Aspergillus fumigatus (strain ATCC MYA-4609 / CBS 101355 / FGSC A1100 / Af293) (Neosartorya fumigata).